A 96-amino-acid polypeptide reads, in one-letter code: SPbeta prophage-derived uncharacterized protein YosV (96 aa).

The sequence is that of SPbeta prophage-derived uncharacterized protein YosV (yosV) from Bacillus subtilis (strain 168).